We begin with the raw amino-acid sequence, 308 residues long: Ornithine carbamoyltransferase (308 aa).

Residues 56-59 (STRT), Gln-83, Arg-107, and 134-137 (HPCQ) each bind carbamoyl phosphate. Residues Asn-165, Asp-225, and 229–230 (SM) contribute to the L-ornithine site. Residues 264–265 (CL) and Arg-292 contribute to the carbamoyl phosphate site.

The protein belongs to the aspartate/ornithine carbamoyltransferase superfamily. OTCase family.

It is found in the cytoplasm. It catalyses the reaction carbamoyl phosphate + L-ornithine = L-citrulline + phosphate + H(+). Its pathway is amino-acid biosynthesis; L-arginine biosynthesis; L-arginine from L-ornithine and carbamoyl phosphate: step 1/3. Its function is as follows. Reversibly catalyzes the transfer of the carbamoyl group from carbamoyl phosphate (CP) to the N(epsilon) atom of ornithine (ORN) to produce L-citrulline. In Nitrobacter winogradskyi (strain ATCC 25391 / DSM 10237 / CIP 104748 / NCIMB 11846 / Nb-255), this protein is Ornithine carbamoyltransferase.